Here is a 401-residue protein sequence, read N- to C-terminus: S-adenosylmethionine synthase (401 aa).

His15 is a binding site for ATP. Asp17 serves as a coordination point for Mg(2+). K(+) is bound at residue Glu48. L-methionine contacts are provided by Glu61 and Gln104. A flexible loop region spans residues 104 to 114 (QSPDIALGVDR). ATP-binding positions include 179–181 (DGK), 246–247 (RF), Asp255, 261–262 (RK), Ala278, and Lys282. Asp255 lines the L-methionine pocket. Residue Lys286 coordinates L-methionine.

Belongs to the AdoMet synthase family. As to quaternary structure, homotetramer; dimer of dimers. It depends on Mg(2+) as a cofactor. K(+) is required as a cofactor.

Its subcellular location is the cytoplasm. It carries out the reaction L-methionine + ATP + H2O = S-adenosyl-L-methionine + phosphate + diphosphate. Its pathway is amino-acid biosynthesis; S-adenosyl-L-methionine biosynthesis; S-adenosyl-L-methionine from L-methionine: step 1/1. Its function is as follows. Catalyzes the formation of S-adenosylmethionine (AdoMet) from methionine and ATP. The overall synthetic reaction is composed of two sequential steps, AdoMet formation and the subsequent tripolyphosphate hydrolysis which occurs prior to release of AdoMet from the enzyme. This chain is S-adenosylmethionine synthase, found in Petrotoga mobilis (strain DSM 10674 / SJ95).